The chain runs to 957 residues: Protein translocase subunit SecA (957 aa).

ATP contacts are provided by residues Q87, 105–109, and D512; that span reads GEGKT. The disordered stretch occupies residues 924–957; that stretch reads AAPAQAPSKSKRSAGRNDPCPCGSGQKYKKCCGK. 4 residues coordinate Zn(2+): C943, C945, C954, and C955.

This sequence belongs to the SecA family. Monomer and homodimer. Part of the essential Sec protein translocation apparatus which comprises SecA, SecYEG and auxiliary proteins SecDF-YajC and YidC. The cofactor is Zn(2+).

The protein resides in the cell inner membrane. It is found in the cytoplasm. The enzyme catalyses ATP + H2O + cellular proteinSide 1 = ADP + phosphate + cellular proteinSide 2.. Part of the Sec protein translocase complex. Interacts with the SecYEG preprotein conducting channel. Has a central role in coupling the hydrolysis of ATP to the transfer of proteins into and across the cell membrane, serving as an ATP-driven molecular motor driving the stepwise translocation of polypeptide chains across the membrane. This chain is Protein translocase subunit SecA, found in Geobacter sp. (strain M21).